Reading from the N-terminus, the 114-residue chain is Cyclin-dependent kinase 2-associated protein 1 (114 aa).

A disordered region spans residues 18–57; sequence AGSVHSPSTSMATSSQYRQLLSDYGPPSLGYTQGTGNSQV. The interval 19–24 is interaction with CDK2AP2; sequence GSVHSP. Residues 20–36 show a composition bias toward polar residues; sequence SVHSPSTSMATSSQYRQ. Position 45 is a phosphoserine; by IKKE (serine 45). Polar residues predominate over residues 47-57; sequence GYTQGTGNSQV.

This sequence belongs to the CDK2AP family. As to quaternary structure, homodimer. Component of the nucleosome remodeling and deacetylase (NuRD) repressor complex, composed of core proteins MTA1, MTA2, MTA3, RBBP4, RBBP7, HDAC1, HDAC2, MBD2, MBD3, and peripherally associated proteins CDK2AP1, CDK2AP2, GATAD2A, GATAD2B, CHD3, CHD4 and CHD5. The exact stoichiometry of the NuRD complex is unknown, and some subunits such as MBD2 and MBD3, GATAD2A and GATAD2B, and CHD3, CHD4 and CHD5 define mutually exclusive NuRD complexes. Interacts with monomeric unphosphorylated CDK2. Interacts with CDK2AP2. Interacts with GATAD2A. Interacts with HDAC1. Interacts with HDAC2. Interacts with MBD2. Interacts with MBD3. Interacts with RBBP4. Interacts with RBBP7. Post-translationally, phosphorylated in vitro by IKBKE at Ser-45.

The protein resides in the nucleus. It localises to the chromosome. Functionally, inhibitor of cyclin-dependent kinase CDK2. Also acts as a component of the histone deacetylase NuRD complex which participates in the remodeling of chromatin. This Mus musculus (Mouse) protein is Cyclin-dependent kinase 2-associated protein 1 (Cdk2ap1).